The following is a 100-amino-acid chain: Small ribosomal subunit protein uS14c (100 aa).

The protein belongs to the universal ribosomal protein uS14 family. As to quaternary structure, part of the 30S ribosomal subunit.

The protein localises to the plastid. It is found in the chloroplast. Binds 16S rRNA, required for the assembly of 30S particles. In Physcomitrium patens (Spreading-leaved earth moss), this protein is Small ribosomal subunit protein uS14c.